A 282-amino-acid chain; its full sequence is Glycine betaine/carnitine transport permease protein GbuB (282 aa).

6 consecutive transmembrane segments (helical) span residues 44–64 (VFDL…TFWV), 70–90 (KWGL…LDFW), 99–119 (LVLT…IWMA), 140–160 (AFVY…PGVV), 220–240 (IMLA…GLGT), and 251–271 (AGGG…LDRL). The 180-residue stretch at 93 to 272 (MTQTLTLVLT…IVAIILDRLT (180 aa)) folds into the ABC transmembrane type-1 domain.

It belongs to the binding-protein-dependent transport system permease family. In terms of assembly, the complex is composed of two ATP-binding proteins (GbuA), two transmembrane proteins (GbuB) and a solute-binding protein (GbuC).

The protein localises to the cell membrane. With respect to regulation, the complex is activated by an osmotic gradient or by low temperature. Part of the ABC transporter complex GbuABC involved in glycine betaine uptake. Responsible for the translocation of the substrate across the membrane. Involved, with BetL and OpuC, in osmoprotection and cryoprotection of Listeria. Can also uptake carnitine when carnitine is abundant in the growth medium. This Listeria monocytogenes serotype 1/2a (strain 10403S) protein is Glycine betaine/carnitine transport permease protein GbuB (gbuB).